Reading from the N-terminus, the 126-residue chain is Cystatin-like protein (126 aa).

The Secondary area of contact motif lies at 72–76 (QVVAG). An intrachain disulfide couples cysteine 94 to cysteine 115.

The protein belongs to the cystatin family.

In Drosophila melanogaster (Fruit fly), this protein is Cystatin-like protein (Cys).